Here is a 267-residue protein sequence, read N- to C-terminus: Ribosyldihydronicotinamide dehydrogenase-like protein traD (267 aa).

FAD-binding positions include H9, 15–16 (LN), and 100–103 (LWWF). Position 122-124 (122-124 (GHG)) interacts with substrate. Residues 152-155 (TLGG) and Y160 each bind FAD.

Belongs to the NAD(P)H dehydrogenase (quinone) family. As to quaternary structure, homodimer. FAD is required as a cofactor.

It participates in secondary metabolite biosynthesis. In terms of biological role, ribosyldihydronicotinamide dehydrogenase-like protein; part of the tra gene cluster that produces terrestric acid. The clavatol biosynthesis cluster cla and the terrestric acid cluster tra are both involved in the production of peniphenones and penilactones. The non-reducing PKS claF is responsible for the formation of clavatol from successive condensations of 3 malonyl-CoA units, presumably with a simple acetyl-CoA starter unit, and 2 methylation steps. The esterase claE probably collaborates with claF by catalyzing the hydrolysis of ACP-bound acyl intermediates to free the ACP from stalled intermediates. The clavatol oxidase claD then converts clavatol to hydroxyclavatol. Spontaneous dehydration of hydroxyclavatol leads to the accumulation of the highly active ortho-quinone methide. On the other hand, the PKS-NRPS hybrid traA is involved in the formation of crustosic acid, with the help of traB and traD. The polyketide synthase module (PKS) of traA is responsible for the synthesis of the polyketide backbone via the condensation of an acetyl-CoA starter unit with 3 malonyl-CoA units. The downstream nonribosomal peptide synthetase (NRPS) module then amidates the carboxyl end of the polyketide with L-malic acid. Because traA lacks a designated enoylreductase (ER) domain, the required activity is provided the enoyl reductase traG. Crustosic acid undergoes decarboxylation and isomerization to the terrestric acid, catalyzed by the 2-oxoglutarate-dependent dioxygenase traH. Both acids are further converted to the 2 gamma-butyrolactones (R)-5-methyltetronic acid and (S)-5-carboxylmethyltetronic acid, with involvement of the cytochrome P450 monooxygenase claJ. Spontaneous addition of the methide to these gamma-butyrolactones leads to peniphenone D and penilactone D, which undergo again stereospecific attacking by methide to give penilactones A and B. This Penicillium crustosum (Blue mold fungus) protein is Ribosyldihydronicotinamide dehydrogenase-like protein traD.